Consider the following 251-residue polypeptide: Triosephosphate isomerase (251 aa).

Substrate contacts are provided by N10 and K12. The active-site Electrophile is the H96. E168 (proton acceptor) is an active-site residue.

The protein belongs to the triosephosphate isomerase family. Homodimer.

The enzyme catalyses D-glyceraldehyde 3-phosphate = dihydroxyacetone phosphate. It functions in the pathway carbohydrate biosynthesis; gluconeogenesis. Its pathway is carbohydrate degradation; glycolysis; D-glyceraldehyde 3-phosphate from glycerone phosphate: step 1/1. The polypeptide is Triosephosphate isomerase (tpiA) (Aspergillus oryzae (strain ATCC 42149 / RIB 40) (Yellow koji mold)).